The sequence spans 209 residues: Holliday junction branch migration complex subunit RuvA (209 aa).

The interval 1–70 (MINYLKGKTT…EDQQILYGFS (70 aa)) is domain I. A domain II region spans residues 71–149 (TDSERDLFRQ…QWEQAIALKT (79 aa)). Residues 150 to 160 (PVSVGVPSREI) are flexible linker. Positions 160–209 (ILEEVEMTLLALGYTDEEIDQAISAISQDNLLLKNPHVEEWLKSAIAWLS) are domain III.

The protein belongs to the RuvA family. As to quaternary structure, homotetramer. Forms an RuvA(8)-RuvB(12)-Holliday junction (HJ) complex. HJ DNA is sandwiched between 2 RuvA tetramers; dsDNA enters through RuvA and exits via RuvB. An RuvB hexamer assembles on each DNA strand where it exits the tetramer. Each RuvB hexamer is contacted by two RuvA subunits (via domain III) on 2 adjacent RuvB subunits; this complex drives branch migration. In the full resolvosome a probable DNA-RuvA(4)-RuvB(12)-RuvC(2) complex forms which resolves the HJ.

It localises to the cytoplasm. In terms of biological role, the RuvA-RuvB-RuvC complex processes Holliday junction (HJ) DNA during genetic recombination and DNA repair, while the RuvA-RuvB complex plays an important role in the rescue of blocked DNA replication forks via replication fork reversal (RFR). RuvA specifically binds to HJ cruciform DNA, conferring on it an open structure. The RuvB hexamer acts as an ATP-dependent pump, pulling dsDNA into and through the RuvAB complex. HJ branch migration allows RuvC to scan DNA until it finds its consensus sequence, where it cleaves and resolves the cruciform DNA. The protein is Holliday junction branch migration complex subunit RuvA of Gloeothece citriformis (strain PCC 7424) (Cyanothece sp. (strain PCC 7424)).